The chain runs to 512 residues: Pentatricopeptide repeat-containing protein At1g64583, mitochondrial (512 aa).

The transit peptide at 1–34 (MRRLIVTGIATSTAKGFRRVVNPNLLGGGAAARA) directs the protein to the mitochondrion. 12 PPR repeats span residues 70-104 (SIVD…GISH), 105-139 (DLYS…GYEP), 140-174 (SIVT…GYEP), 175-209 (NVVV…GLGA), 210-244 (DVVT…SINP), 245-279 (DVVT…SVDP), 280-314 (NNVT…GCFP), 315-349 (NVVT…GFNA), 350-384 (DIFT…RVTP), 385-415 (DIIT…MRES), 420-454 (GIVA…GVKP), and 455-489 (DART…GIIC).

Belongs to the PPR family. P subfamily.

The protein resides in the mitochondrion. This Arabidopsis thaliana (Mouse-ear cress) protein is Pentatricopeptide repeat-containing protein At1g64583, mitochondrial.